A 152-amino-acid chain; its full sequence is Ribosome maturation factor RimP (152 aa).

This sequence belongs to the RimP family.

The protein localises to the cytoplasm. Functionally, required for maturation of 30S ribosomal subunits. This chain is Ribosome maturation factor RimP, found in Pseudomonas aeruginosa (strain LESB58).